An 84-amino-acid chain; its full sequence is Small ribosomal subunit protein bS18B (84 aa).

It belongs to the bacterial ribosomal protein bS18 family. In terms of assembly, part of the 30S ribosomal subunit. Forms a tight heterodimer with protein bS6.

In terms of biological role, binds as a heterodimer with protein bS6 to the central domain of the 16S rRNA, where it helps stabilize the platform of the 30S subunit. In Mycolicibacterium smegmatis (strain ATCC 700084 / mc(2)155) (Mycobacterium smegmatis), this protein is Small ribosomal subunit protein bS18B.